Consider the following 617-residue polypeptide: Translation initiation factor IF-2 (617 aa).

Over residues M1–K11 the composition is skewed to basic residues. The tract at residues M1–Q25 is disordered. Residues P119–Y288 enclose the tr-type G domain. Residues G128–T135 form a G1 region. Residue G128–T135 participates in GTP binding. Residues G153 to K157 form a G2 region. Residues D175–G178 form a G3 region. GTP is bound by residues D175–H179 and N229–D232. The tract at residues N229 to D232 is G4. Residues S265–L267 form a G5 region.

Belongs to the TRAFAC class translation factor GTPase superfamily. Classic translation factor GTPase family. IF-2 subfamily.

The protein localises to the cytoplasm. One of the essential components for the initiation of protein synthesis. Protects formylmethionyl-tRNA from spontaneous hydrolysis and promotes its binding to the 30S ribosomal subunits. Also involved in the hydrolysis of GTP during the formation of the 70S ribosomal complex. The protein is Translation initiation factor IF-2 (infB) of Mycoplasma pneumoniae (strain ATCC 29342 / M129 / Subtype 1) (Mycoplasmoides pneumoniae).